The sequence spans 700 residues: Dipeptidyl aminopeptidase 1 (700 aa).

Positions 1 to 27 are cleaved as a signal peptide; that stretch reads MAKRIFSVSFLLVLLNVLHICIKFSVA. N-linked (GlcNAc...) asparagine glycosylation is found at asparagine 52, asparagine 144, asparagine 265, asparagine 337, and asparagine 373. Positions 210–369 are excised as a propeptide; that stretch reads DNVNEIKHLD…SPKRELEINE (160 aa). Cystine bridges form between cysteine 395-cysteine 446 and cysteine 439-cysteine 478. The active site involves cysteine 398. The residue at position 416 (threonine 416) is a Sulfothreonine. Chloride-binding residues include phenylalanine 450 and tyrosine 452. Asparagine 481, asparagine 490, and asparagine 507 each carry an N-linked (GlcNAc...) asparagine glycan. Chloride is bound at residue tyrosine 549. Residue asparagine 615 is glycosylated (N-linked (GlcNAc...) asparagine). Active-site residues include histidine 624 and asparagine 648. Asparagine 667 carries N-linked (GlcNAc...) asparagine glycosylation.

This sequence belongs to the peptidase C1 family. Monomer. It depends on chloride as a cofactor.

The protein resides in the vacuole lumen. The protein localises to the parasitophorous vacuole lumen. It carries out the reaction Release of an N-terminal dipeptide, Xaa-Yaa-|-Zaa-, except when Xaa is Arg or Lys, or Yaa or Zaa is Pro.. In terms of biological role, thiol protease that cleaves dipeptides from the N-terminus of protein substrates. Active against a broad range of dipeptide substrates composed of both polar and hydrophobic amino acids. Proline cannot occupy the P1 position and arginine or lysine cannot occupy the P2 position of the substrate. Involved in host hemoglobin degradation by generating dipeptides from hemoglobin-derived oligopeptides. The sequence is that of Dipeptidyl aminopeptidase 1 from Plasmodium falciparum (isolate 3D7).